Reading from the N-terminus, the 297-residue chain is Virulence genes transcriptional activator SpvR (297 aa).

Residues 1-61 enclose the HTH lysR-type domain; the sequence is MDFLINKKLK…IRKNGTLIPT (61 aa). Positions 21–40 form a DNA-binding region, H-T-H motif; sequence FSIATSVLYITRTPLSRVIS.

It belongs to the LysR transcriptional regulatory family.

It localises to the cytoplasm. In terms of biological role, positive regulator for the plasmid-encoded virulence factors SpvA, SpvB, and SpvC. This chain is Virulence genes transcriptional activator SpvR (spvR), found in Salmonella dublin.